The following is a 314-amino-acid chain: Transmembrane protein 178B (314 aa).

Positions Met1–Ser24 are cleaved as a signal peptide. The disordered stretch occupies residues Asp32–Arg83. The segment covering His36 to Gly45 has biased composition (basic residues). 3 helical membrane-spanning segments follow: residues Ala194–Gly214, Leu228–Ile248, and Met274–Ala294.

The protein belongs to the TMEM178 family.

It is found in the membrane. The sequence is that of Transmembrane protein 178B (tmem178b) from Xenopus tropicalis (Western clawed frog).